The sequence spans 302 residues: Sulfate adenylyltransferase subunit 2 (302 aa).

Belongs to the PAPS reductase family. CysD subfamily. As to quaternary structure, heterodimer composed of CysD, the smaller subunit, and CysN.

The enzyme catalyses sulfate + ATP + H(+) = adenosine 5'-phosphosulfate + diphosphate. Its pathway is sulfur metabolism; hydrogen sulfide biosynthesis; sulfite from sulfate: step 1/3. In terms of biological role, with CysN forms the ATP sulfurylase (ATPS) that catalyzes the adenylation of sulfate producing adenosine 5'-phosphosulfate (APS) and diphosphate, the first enzymatic step in sulfur assimilation pathway. APS synthesis involves the formation of a high-energy phosphoric-sulfuric acid anhydride bond driven by GTP hydrolysis by CysN coupled to ATP hydrolysis by CysD. This Zymomonas mobilis subsp. mobilis (strain ATCC 31821 / ZM4 / CP4) protein is Sulfate adenylyltransferase subunit 2.